The primary structure comprises 1318 residues: DNA-directed RNA polymerase subunit beta' (1318 aa).

The Zn(2+) site is built by C221, C295, C302, and C305.

It belongs to the RNA polymerase beta' chain family. RpoC2 subfamily. As to quaternary structure, in cyanobacteria the RNAP catalytic core is composed of 2 alpha, 1 beta, 1 beta', 1 gamma and 1 omega subunit. When a sigma factor is associated with the core the holoenzyme is formed, which can initiate transcription. The cofactor is Zn(2+).

It carries out the reaction RNA(n) + a ribonucleoside 5'-triphosphate = RNA(n+1) + diphosphate. Its function is as follows. DNA-dependent RNA polymerase catalyzes the transcription of DNA into RNA using the four ribonucleoside triphosphates as substrates. The chain is DNA-directed RNA polymerase subunit beta' from Synechococcus elongatus (strain ATCC 33912 / PCC 7942 / FACHB-805) (Anacystis nidulans R2).